A 455-amino-acid chain; its full sequence is Ribosome biogenesis protein NOP53 (455 aa).

A compositionally biased stretch (polar residues) spans 1–15 (MAPTNLTKKPSQYKQ). The disordered stretch occupies residues 1–25 (MAPTNLTKKPSQYKQSSRKGKKAWR). Basic residues predominate over residues 16–25 (SSRKGKKAWR). The residue at position 31 (Ser-31) is a Phosphoserine. The interval 264 to 333 (HLMETLDDNE…RNKAKRHEEK (70 aa)) is disordered. Positions 268 to 294 (TLDDNEEEESSSNEEEEEEEEENENEN) are enriched in acidic residues. A compositionally biased stretch (basic residues) spans 314–328 (VKNKKKTKYQRNKAK).

The protein belongs to the NOP53 family. As to quaternary structure, interacts with CBF5, FPR3, FPR4, NOP2, PIH1, RRN3, RRP6 and PAP2. Interacts with pre-60S ribosomal particles.

Its subcellular location is the nucleus. The protein localises to the nucleolus. It localises to the nucleoplasm. Functionally, late-acting factor in the nuclear maturation of 60S ribosomal subunits, which is required for normal acquisition of export competence. Required for the export of the large subunit. Acts to stimulate the RNase activity of the exosome complex, and may recruit the exosome to 7S pre-rRNA for processing. Associates with numerous RNAs including the 27S and 7S pre-rRNAs and the box H/ACA snoRNA snR37. Also interacts (via N-terminal region) with the mature 25S rRNA and the mature 5.8S rRNA. In Saccharomyces cerevisiae (strain ATCC 204508 / S288c) (Baker's yeast), this protein is Ribosome biogenesis protein NOP53.